A 94-amino-acid chain; its full sequence is Neutrophil antibiotic peptide NP-2 (94 aa).

Residues 1-19 (MRTLTLLTALLLLALHTQA) form the signal peptide. A propeptide spanning residues 20 to 62 (KSPQGTAEEAPDQEQLVMEDQDISISFGGDKGTALQDADVKAG) is cleaved from the precursor. 3 disulfides stabilise this stretch: C65–C93, C67–C82, and C72–C92.

Belongs to the alpha-defensin family. Highest expression in bone marrow and to a much lesser extent in small intestine.

Its subcellular location is the secreted. Its function is as follows. Active in vitro against S.aureus, fungi, Gram-positive and Gram-negative bacteria and to a lesser extent against an enveloped virus. The chain is Neutrophil antibiotic peptide NP-2 (Defa) from Rattus norvegicus (Rat).